Reading from the N-terminus, the 170-residue chain is Transcription factor E (170 aa).

Positions methionine 1 to arginine 93 constitute an HTH TFE/IIEalpha-type domain.

This sequence belongs to the TFE family. Monomer. Interaction with RNA polymerase subunits RpoF and RpoE is necessary for Tfe stimulatory transcription activity. Able to interact with Tbp and RNA polymerase in the absence of DNA promoter. Interacts both with the preinitiation and elongation complexes.

In terms of biological role, transcription factor that plays a role in the activation of archaeal genes transcribed by RNA polymerase. Facilitates transcription initiation by enhancing TATA-box recognition by TATA-box-binding protein (Tbp), and transcription factor B (Tfb) and RNA polymerase recruitment. Not absolutely required for transcription in vitro, but particularly important in cases where Tbp or Tfb function is not optimal. It dynamically alters the nucleic acid-binding properties of RNA polymerases by stabilizing the initiation complex and destabilizing elongation complexes. Seems to translocate with the RNA polymerase following initiation and acts by binding to the non template strand of the transcription bubble in elongation complexes. The polypeptide is Transcription factor E (Pyrobaculum islandicum (strain DSM 4184 / JCM 9189 / GEO3)).